Here is a 301-residue protein sequence, read N- to C-terminus: Very-long-chain aldehyde decarbonylase GL1-10 (301 aa).

3 helical membrane-spanning segments follow: residues 36 to 56 (VLFW…PLPV), 94 to 114 (FFLV…MVGI), and 187 to 207 (SFVG…WIVL). The Fatty acid hydroxylase domain maps to 131–265 (LVYFLVEDYL…FTYCDYLYGT (135 aa)).

It belongs to the sterol desaturase family. As to quaternary structure, homodimer. As to expression, expressed ubiquitously.

Its subcellular location is the endoplasmic reticulum membrane. It catalyses the reaction a long-chain fatty aldehyde + 2 NADPH + O2 + H(+) = a long-chain alkane + formate + 2 NADP(+) + H2O. Functionally, aldehyde decarbonylase involved in the conversion of aldehydes to alkanes. Core component of a very-long-chain alkane synthesis complex. The polypeptide is Very-long-chain aldehyde decarbonylase GL1-10 (Oryza sativa subsp. japonica (Rice)).